The chain runs to 89 residues: Co-chaperonin GroES (89 aa).

It belongs to the GroES chaperonin family. As to quaternary structure, heptamer of 7 subunits arranged in a ring. Interacts with the chaperonin GroEL.

Its subcellular location is the cytoplasm. In terms of biological role, together with the chaperonin GroEL, plays an essential role in assisting protein folding. The GroEL-GroES system forms a nano-cage that allows encapsulation of the non-native substrate proteins and provides a physical environment optimized to promote and accelerate protein folding. GroES binds to the apical surface of the GroEL ring, thereby capping the opening of the GroEL channel. This chain is Co-chaperonin GroES, found in Kosmotoga olearia (strain ATCC BAA-1733 / DSM 21960 / TBF 19.5.1).